Consider the following 101-residue polypeptide: Small ribosomal subunit protein bS6 (101 aa).

This sequence belongs to the bacterial ribosomal protein bS6 family.

Binds together with bS18 to 16S ribosomal RNA. The sequence is that of Small ribosomal subunit protein bS6 from Pseudarthrobacter chlorophenolicus (strain ATCC 700700 / DSM 12829 / CIP 107037 / JCM 12360 / KCTC 9906 / NCIMB 13794 / A6) (Arthrobacter chlorophenolicus).